The primary structure comprises 168 residues: ATP synthase subunit b (168 aa).

A helical membrane pass occupies residues 9 to 29; that stretch reads AIPFGTIAYTLFIFLLLLVML.

The protein belongs to the ATPase B chain family. F-type ATPases have 2 components, F(1) - the catalytic core - and F(0) - the membrane proton channel. F(1) has five subunits: alpha(3), beta(3), gamma(1), delta(1), epsilon(1). F(0) has three main subunits: a(1), b(2) and c(10-14). The alpha and beta chains form an alternating ring which encloses part of the gamma chain. F(1) is attached to F(0) by a central stalk formed by the gamma and epsilon chains, while a peripheral stalk is formed by the delta and b chains.

Its subcellular location is the cell membrane. F(1)F(0) ATP synthase produces ATP from ADP in the presence of a proton or sodium gradient. F-type ATPases consist of two structural domains, F(1) containing the extramembraneous catalytic core and F(0) containing the membrane proton channel, linked together by a central stalk and a peripheral stalk. During catalysis, ATP synthesis in the catalytic domain of F(1) is coupled via a rotary mechanism of the central stalk subunits to proton translocation. Functionally, component of the F(0) channel, it forms part of the peripheral stalk, linking F(1) to F(0). This is ATP synthase subunit b from Bacillus cereus (strain ATCC 10987 / NRS 248).